Here is a 273-residue protein sequence, read N- to C-terminus: tRNA pseudouridine synthase B (273 aa).

Asp38 functions as the Nucleophile in the catalytic mechanism.

This sequence belongs to the pseudouridine synthase TruB family. Type 1 subfamily.

The catalysed reaction is uridine(55) in tRNA = pseudouridine(55) in tRNA. In terms of biological role, responsible for synthesis of pseudouridine from uracil-55 in the psi GC loop of transfer RNAs. The chain is tRNA pseudouridine synthase B from Campylobacter concisus (strain 13826).